Reading from the N-terminus, the 165-residue chain is Anaerobic nitrite reductase GLB1 (165 aa).

The 151-residue stretch at Val-12–Lys-162 folds into the Globin domain. A Homodimerization motif is present at residues Glu-45–Ser-49. Residues Ser-55, Lys-69, His-73, Arg-103, Thr-107, and His-108 each coordinate heme b. Residues Asp-115–Glu-127 carry the Homodimerization motif.

Belongs to the plant globin family. Homodimer. Heme b serves as cofactor. In embryonic organs and at low levels in vegetative organs.

The protein localises to the cytoplasm. It is found in the nucleus. The enzyme catalyses Fe(III)-heme b-[protein] + nitric oxide + H2O = Fe(II)-heme b-[protein] + nitrite + 2 H(+). In terms of biological role, phytoglobin that reduces nitrite to nitric oxide (NO) under anoxic conditions (e.g. during flooding or in waterlogged soil). May not function as an oxygen storage or transport protein. Has an unusually high affinity for O(2) through an hexacoordinate heme iron because of a very low dissociation constant. In Zea mays (Maize), this protein is Anaerobic nitrite reductase GLB1 (HB).